The following is an 856-amino-acid chain: TPR repeat-containing protein TP_0123 (856 aa).

3 TPR repeats span residues 107 to 140, 523 to 556, and 603 to 636; these read YAAV…VADD, YRTF…AEQL, and TVSL…ALQY.

In Treponema pallidum (strain Nichols), this protein is TPR repeat-containing protein TP_0123.